The following is a 70-amino-acid chain: Large ribosomal subunit protein bL31c (70 aa).

Belongs to the bacterial ribosomal protein bL31 family. Type A subfamily. Part of the 50S ribosomal subunit.

It is found in the plastid. Its subcellular location is the chloroplast. Binds the 23S rRNA. This is Large ribosomal subunit protein bL31c from Pyropia yezoensis (Susabi-nori).